A 137-amino-acid chain; its full sequence is Large ribosomal subunit protein uL16 (137 aa).

Belongs to the universal ribosomal protein uL16 family. As to quaternary structure, part of the 50S ribosomal subunit.

In terms of biological role, binds 23S rRNA and is also seen to make contacts with the A and possibly P site tRNAs. In Rhizobium etli (strain CIAT 652), this protein is Large ribosomal subunit protein uL16.